The following is a 643-amino-acid chain: DNA-directed RNA polymerase subunit beta' (643 aa).

Residues Cys-83, Cys-85, Cys-98, and Cys-101 each contribute to the Zn(2+) site. Mg(2+)-binding residues include Asp-480, Asp-482, and Asp-484.

Belongs to the RNA polymerase beta' chain family. RpoC1 subfamily. In terms of assembly, in plastids the minimal PEP RNA polymerase catalytic core is composed of four subunits: alpha, beta, beta', and beta''. When a (nuclear-encoded) sigma factor is associated with the core the holoenzyme is formed, which can initiate transcription. Requires Mg(2+) as cofactor. The cofactor is Zn(2+).

Its subcellular location is the plastid. The protein resides in the organellar chromatophore. The catalysed reaction is RNA(n) + a ribonucleoside 5'-triphosphate = RNA(n+1) + diphosphate. Its function is as follows. DNA-dependent RNA polymerase catalyzes the transcription of DNA into RNA using the four ribonucleoside triphosphates as substrates. This chain is DNA-directed RNA polymerase subunit beta', found in Paulinella chromatophora.